Consider the following 62-residue polypeptide: Photosystem II reaction center protein Z (62 aa).

A run of 2 helical transmembrane segments spans residues 8 to 28 (SVFA…VVLA) and 41 to 61 (FSGA…NSFI).

Belongs to the PsbZ family. PSII is composed of 1 copy each of membrane proteins PsbA, PsbB, PsbC, PsbD, PsbE, PsbF, PsbH, PsbI, PsbJ, PsbK, PsbL, PsbM, PsbT, PsbY, PsbZ, Psb30/Ycf12, at least 3 peripheral proteins of the oxygen-evolving complex and a large number of cofactors. It forms dimeric complexes.

It is found in the plastid. The protein localises to the chloroplast thylakoid membrane. Its function is as follows. May control the interaction of photosystem II (PSII) cores with the light-harvesting antenna, regulates electron flow through the 2 photosystem reaction centers. PSII is a light-driven water plastoquinone oxidoreductase, using light energy to abstract electrons from H(2)O, generating a proton gradient subsequently used for ATP formation. The sequence is that of Photosystem II reaction center protein Z from Chaetosphaeridium globosum (Charophycean green alga).